A 287-amino-acid polypeptide reads, in one-letter code: Probable ribosomal RNA small subunit methyltransferase A (287 aa).

Residues histidine 29, leucine 31, glycine 56, glutamate 77, aspartate 102, and asparagine 117 each contribute to the S-adenosyl-L-methionine site.

It belongs to the class I-like SAM-binding methyltransferase superfamily. rRNA adenine N(6)-methyltransferase family. RsmA subfamily.

The protein localises to the cytoplasm. In terms of biological role, specifically dimethylates two adjacent adenosines in the loop of a conserved hairpin near the 3'-end of 16S rRNA in the 30S particle. May play a critical role in biogenesis of 30S subunits. The protein is Probable ribosomal RNA small subunit methyltransferase A of Methanosarcina barkeri (strain Fusaro / DSM 804).